Reading from the N-terminus, the 140-residue chain is Ribosome-binding factor A (140 aa).

Over residues 1-13 (MQKKSSSKSHRAT) the composition is skewed to basic residues. A disordered region spans residues 1-22 (MQKKSSSKSHRATRGPSQRQLR).

This sequence belongs to the RbfA family. As to quaternary structure, monomer. Binds 30S ribosomal subunits, but not 50S ribosomal subunits or 70S ribosomes.

The protein localises to the cytoplasm. Its function is as follows. One of several proteins that assist in the late maturation steps of the functional core of the 30S ribosomal subunit. Associates with free 30S ribosomal subunits (but not with 30S subunits that are part of 70S ribosomes or polysomes). Required for efficient processing of 16S rRNA. May interact with the 5'-terminal helix region of 16S rRNA. The chain is Ribosome-binding factor A from Parvibaculum lavamentivorans (strain DS-1 / DSM 13023 / NCIMB 13966).